Here is a 322-residue protein sequence, read N- to C-terminus: MKTLAGLVLGLVIFDAAVTAPTLESINYDSETYDATLEDLDNLYNYENIPVDKVEIEIATVMPSGNRELLTPPPQPEKAQEEEEEEESTPRLIDGSSPQEPEFTGVLGPHTNEDFPTCLLCTCISTTVYCDDHELDAIPPLPKNTAYFYSRFNRIKKINKNDFASLSDLKRIDLTSNLISEIDEDAFRKLPQLRELVLRDNKIRQLPELPTTLTFIDISNNRLGRKGIKQEAFKDMYDLHHLYLTDNNLDHIPLPLPENLRALHLQNNNILEMHEDTFCNVKNLTYIRKALEDIRLDGNPINLSKTPQAYMCLPRLPVGSLV.

The N-terminal stretch at 1–19 is a signal peptide; it reads MKTLAGLVLGLVIFDAAVT. O-linked (GalNAc...) threonine glycosylation is present at Thr60. The O-linked (Xyl...) (dermatan sulfate) serine glycan is linked to Ser64. A disordered region spans residues 64-101; the sequence is SGNRELLTPPPQPEKAQEEEEEEESTPRLIDGSSPQEP. O-linked (GalNAc...) serine glycosylation occurs at Ser96. An LRRNT domain is found at 106–143; the sequence is VLGPHTNEDFPTCLLCTCISTTVYCDDHELDAIPPLPK. Cys118 and Cys130 are oxidised to a cystine. LRR repeat units follow at residues 144-165, 168-189, 192-213, 238-258, and 259-280; these read NTAYFYSRFNRIKKINKNDFAS, DLKRIDLTSNLISEIDEDAFRK, QLRELVLRDNKIRQLPELPTTL, DLHHLYLTDNNLDHIPLPLPE, and NLRALHLQNNNILEMHEDTFCN. Cys279 and Cys312 are disulfide-bonded. N-linked (GlcNAc...) asparagine glycans are attached at residues Asn283 and Asn302. Residues 290–310 form an LRR 6 repeat; sequence ALEDIRLDGNPINLSKTPQAY.

Belongs to the small leucine-rich proteoglycan (SLRP) family. SLRP class III subfamily. The O-linked polysaccharides on Thr-60 and Ser-96 are probably the mucin type linked to GalNAc. There is one glycosaminoglycan chain, known to be dermatan sulfate, and it is probably the O-glycosylation at Ser-64. As to expression, cartilage, ligament, and placenta.

It localises to the secreted. It is found in the extracellular space. Its subcellular location is the extracellular matrix. Functionally, may have a role in bone formation and also in establishing the ordered structure of cartilage through matrix organization. The chain is Epiphycan (EPYC) from Homo sapiens (Human).